A 248-amino-acid chain; its full sequence is Putative homeobox-leucine zipper protein HOX26 (248 aa).

A disordered region spans residues 50 to 118; sequence KKVAAAAVVA…GDEEGASRKK (69 aa). Basic residues predominate over residues 79 to 89; sequence RQRRSCKKGRR. The homeobox DNA-binding region spans 114-173; it reads ASRKKLRLTGEQATLLEDSFRAHNILSHAEKQELAGKLGLSARQVEVWFQNRRARTKLKQ. The leucine-zipper stretch occupies residues 172–216; it reads KQTEADCDLLRRWCDHLAADNARLRRDLAELRRSSSSPPVSGLAV.

The protein belongs to the HD-ZIP homeobox family. Class II subfamily.

The protein localises to the nucleus. Its function is as follows. Probable transcription factor. The protein is Putative homeobox-leucine zipper protein HOX26 (HOX26) of Oryza sativa subsp. japonica (Rice).